A 155-amino-acid polypeptide reads, in one-letter code: Small ribosomal subunit protein uS7 (155 aa).

The protein belongs to the universal ribosomal protein uS7 family. Part of the 30S ribosomal subunit. Contacts proteins S9 and S11.

Its function is as follows. One of the primary rRNA binding proteins, it binds directly to 16S rRNA where it nucleates assembly of the head domain of the 30S subunit. Is located at the subunit interface close to the decoding center, probably blocks exit of the E-site tRNA. The sequence is that of Small ribosomal subunit protein uS7 from Xanthomonas campestris pv. campestris (strain 8004).